We begin with the raw amino-acid sequence, 743 residues long: Catalase-peroxidase (743 aa).

The span at 1–15 (MSSDSRPPQPDTSTQ) shows a compositional bias: polar residues. The interval 1-40 (MSSDSRPPQPDTSTQSNSESESPAISSPTPQDHAPMTNRD) is disordered. The span at 16–28 (SNSESESPAISSP) shows a compositional bias: low complexity. Positions 110-233 (WHAAGTYRIQ…YGATTMGLIY (124 aa)) form a cross-link, tryptophyl-tyrosyl-methioninium (Trp-Tyr) (with M-259). The Proton acceptor role is filled by H111. The segment at residues 233 to 259 (YVNPEGPEGKPDPVAAAHDIRETFARM) is a cross-link (tryptophyl-tyrosyl-methioninium (Tyr-Met) (with W-110)). H274 is a binding site for heme b. Positions 490–511 (DKRGGANGGRLRLEPQKSWESN) are disordered.

This sequence belongs to the peroxidase family. Peroxidase/catalase subfamily. As to quaternary structure, homodimer or homotetramer. The cofactor is heme b. In terms of processing, formation of the three residue Trp-Tyr-Met cross-link is important for the catalase, but not the peroxidase activity of the enzyme.

The enzyme catalyses H2O2 + AH2 = A + 2 H2O. It catalyses the reaction 2 H2O2 = O2 + 2 H2O. Functionally, bifunctional enzyme with both catalase and broad-spectrum peroxidase activity. This Mycobacterium marinum (strain ATCC BAA-535 / M) protein is Catalase-peroxidase.